The primary structure comprises 89 residues: Large ribosomal subunit protein bL27 (89 aa).

A disordered region spans residues 1–26 (MAHKKGVGSSRNGRDSESKRLGVKEG). Basic and acidic residues predominate over residues 12 to 26 (NGRDSESKRLGVKEG).

It belongs to the bacterial ribosomal protein bL27 family.

The chain is Large ribosomal subunit protein bL27 from Desulforamulus reducens (strain ATCC BAA-1160 / DSM 100696 / MI-1) (Desulfotomaculum reducens).